The primary structure comprises 414 residues: Dual-specificity RNA methyltransferase RlmN (414 aa).

Catalysis depends on Glu127, which acts as the Proton acceptor. The Radical SAM core domain occupies 133–380; the sequence is GEGRGTLCVS…SPIRMPRGRD (248 aa). A disulfide bond links Cys140 and Cys385. Residues Cys147, Cys151, and Cys154 each coordinate [4Fe-4S] cluster. Residues 211 to 212, Ser243, 265 to 267, and Asn342 contribute to the S-adenosyl-L-methionine site; these read GE and SLH. Cys385 (S-methylcysteine intermediate) is an active-site residue.

The protein belongs to the radical SAM superfamily. RlmN family. Requires [4Fe-4S] cluster as cofactor.

It localises to the cytoplasm. The catalysed reaction is adenosine(2503) in 23S rRNA + 2 reduced [2Fe-2S]-[ferredoxin] + 2 S-adenosyl-L-methionine = 2-methyladenosine(2503) in 23S rRNA + 5'-deoxyadenosine + L-methionine + 2 oxidized [2Fe-2S]-[ferredoxin] + S-adenosyl-L-homocysteine. It catalyses the reaction adenosine(37) in tRNA + 2 reduced [2Fe-2S]-[ferredoxin] + 2 S-adenosyl-L-methionine = 2-methyladenosine(37) in tRNA + 5'-deoxyadenosine + L-methionine + 2 oxidized [2Fe-2S]-[ferredoxin] + S-adenosyl-L-homocysteine. In terms of biological role, specifically methylates position 2 of adenine 2503 in 23S rRNA and position 2 of adenine 37 in tRNAs. m2A2503 modification seems to play a crucial role in the proofreading step occurring at the peptidyl transferase center and thus would serve to optimize ribosomal fidelity. This chain is Dual-specificity RNA methyltransferase RlmN, found in Bartonella bacilliformis (strain ATCC 35685 / KC583 / Herrer 020/F12,63).